The sequence spans 240 residues: MQLPPLQSATLIRRYKRFLADVQLDNGEVLTIHCANTGAMTGCGEAGDIVWYSHSDSQTRKYPHSWELTELKNGNMVCINTHRSNQLTLEALQNKQIKALAMYEQILPEVKYGEENSRIDFLLKGDGLPDCYVEVKSVTLVKNTIGMFPDAVTTRGQKHLRELIAMKKRGHRAVVFFAGLHNGFDCFKVAEYIDPEYDKLLQEAIQEGVEVYAYAGKFDFSDKKPTALSLTHCVPYIGKK.

This sequence belongs to the SfsA family.

This Pasteurella multocida (strain Pm70) protein is Sugar fermentation stimulation protein homolog.